The sequence spans 115 residues: Somatostatin-1 (115 aa).

The N-terminal stretch at 1–24 is a signal peptide; it reads MLSCRFQCALVLLSLAVVFSKVSA. Residues 25-88 constitute a propeptide that is removed on maturation; sequence APSDLRLRQL…QDEVRLELDR (64 aa). Residues 65–95 form a disordered region; that stretch reads NDALDSSDLSRGADQDEVRLELDRSANSSPL. Residues 75–88 are compositionally biased toward basic and acidic residues; that stretch reads RGADQDEVRLELDR. Cys104 and Cys115 are joined by a disulfide.

Belongs to the somatostatin family.

It is found in the secreted. Somatostatin inhibits the release of somatotropin. The protein is Somatostatin-1 (sst1) of Protopterus annectens (African lungfish).